The following is a 102-amino-acid chain: uncharacterized protein (102 aa).

The signal sequence occupies residues M1–A41.

This is an uncharacterized protein from Saccharomyces cerevisiae (strain ATCC 204508 / S288c) (Baker's yeast).